Reading from the N-terminus, the 206-residue chain is Holliday junction branch migration complex subunit RuvA (206 aa).

The domain I stretch occupies residues 1 to 63 (MIASLRGTVI…EDAMKLYGFI (63 aa)). The segment at 64–142 (DNESREMFSV…AFAAGVVDEA (79 aa)) is domain II. Residues 143 to 153 (GEQISLPNANI) form a flexible linker region. Positions 154-206 (ASEVVVEQVSQALVGLGFSEKQSDDAVSFVLAADPSLDTSGALRAALAKLSGK) are domain III.

The protein belongs to the RuvA family. As to quaternary structure, homotetramer. Forms an RuvA(8)-RuvB(12)-Holliday junction (HJ) complex. HJ DNA is sandwiched between 2 RuvA tetramers; dsDNA enters through RuvA and exits via RuvB. An RuvB hexamer assembles on each DNA strand where it exits the tetramer. Each RuvB hexamer is contacted by two RuvA subunits (via domain III) on 2 adjacent RuvB subunits; this complex drives branch migration. In the full resolvosome a probable DNA-RuvA(4)-RuvB(12)-RuvC(2) complex forms which resolves the HJ.

The protein resides in the cytoplasm. The RuvA-RuvB-RuvC complex processes Holliday junction (HJ) DNA during genetic recombination and DNA repair, while the RuvA-RuvB complex plays an important role in the rescue of blocked DNA replication forks via replication fork reversal (RFR). RuvA specifically binds to HJ cruciform DNA, conferring on it an open structure. The RuvB hexamer acts as an ATP-dependent pump, pulling dsDNA into and through the RuvAB complex. HJ branch migration allows RuvC to scan DNA until it finds its consensus sequence, where it cleaves and resolves the cruciform DNA. The sequence is that of Holliday junction branch migration complex subunit RuvA from Corynebacterium glutamicum (strain R).